Consider the following 182-residue polypeptide: ATP-dependent protease subunit HslV (182 aa).

Threonine 6 is a catalytic residue. 3 residues coordinate Na(+): alanine 164, cysteine 167, and threonine 170.

The protein belongs to the peptidase T1B family. HslV subfamily. In terms of assembly, a double ring-shaped homohexamer of HslV is capped on each side by a ring-shaped HslU homohexamer. The assembly of the HslU/HslV complex is dependent on binding of ATP.

It is found in the cytoplasm. It carries out the reaction ATP-dependent cleavage of peptide bonds with broad specificity.. Allosterically activated by HslU binding. In terms of biological role, protease subunit of a proteasome-like degradation complex believed to be a general protein degrading machinery. The protein is ATP-dependent protease subunit HslV of Borreliella afzelii (strain PKo) (Borrelia afzelii).